The following is a 332-amino-acid chain: Large ribosomal subunit protein mL44 (332 aa).

A mitochondrion-targeting transit peptide spans 1–30; the sequence is MASGLVRLLQQGHRCLLAPVAPKLVPPVRG. Residues 86–228 form the RNase III domain; that stretch reads DLLKTAFVNS…LITQMTGKEL (143 aa). A DRBM domain is found at 236–306; that stretch reads NPMGLLVEEL…ARVALRKLYG (71 aa).

This sequence belongs to the ribonuclease III family. Mitochondrion-specific ribosomal protein mL44 subfamily. As to quaternary structure, component of the mitochondrial large ribosomal subunit (mt-LSU). Mature mammalian 55S mitochondrial ribosomes consist of a small (28S) and a large (39S) subunit. The 28S small subunit contains a 12S ribosomal RNA (12S mt-rRNA) and 30 different proteins. The 39S large subunit contains a 16S rRNA (16S mt-rRNA), a copy of mitochondrial valine transfer RNA (mt-tRNA(Val)), which plays an integral structural role, and 52 different proteins.

The protein localises to the mitochondrion. Component of the 39S subunit of mitochondrial ribosome. May have a function in the assembly/stability of nascent mitochondrial polypeptides exiting the ribosome. The chain is Large ribosomal subunit protein mL44 (MRPL44) from Homo sapiens (Human).